The sequence spans 375 residues: Probable G-protein coupled receptor 34 (375 aa).

The Extracellular portion of the chain corresponds to 1–54 (MTTTSVDSWLCSSHGMHFITNYSDQASQNFSGVPNVTSCPMDEKLLSTVLTTFY). N-linked (GlcNAc...) asparagine glycosylation is found at Asn21, Asn29, and Asn35. A helical transmembrane segment spans residues 55 to 75 (SVIFLVGLVGNIIALYVFLGI). Residues 76–81 (HRKRNS) lie on the Cytoplasmic side of the membrane. Residues 82–102 (IQIYLLNVAVADLLLIFCLPF) traverse the membrane as a helical segment. Topologically, residues 103-121 (RIMYHINQNKWTLGVILCK) are extracellular. Cys120 and Cys197 are disulfide-bonded. The helical transmembrane segment at 122–142 (VVGTLFYMNMYISIILLGFIS) threads the bilayer. The Cytoplasmic segment spans residues 143–164 (LDRYIKINRSIQQRRAITTKQS). A helical membrane pass occupies residues 165–185 (IYVCCIVWTVALAGFLTMIIL). The Extracellular portion of the chain corresponds to 186–209 (TLKKGGHNSTMCFHYRDRHNAKGE). Residue Asn193 is glycosylated (N-linked (GlcNAc...) asparagine). Residues 210-230 (AIFNFVLVVMFWLIFLLIILS) form a helical membrane-spanning segment. Over 231–262 (YIKIGKNLLRISKRRSKFPNSGKYATTARNSF) the chain is Cytoplasmic. Residues 263-283 (IVLIIFTICFVPYHAFRFIYI) traverse the membrane as a helical segment. The Extracellular portion of the chain corresponds to 284–303 (SSQLNVSSCYWKEIIHKTNE). Asn288 carries N-linked (GlcNAc...) asparagine glycosylation. The helical transmembrane segment at 304-324 (IMLVFSSFNSCLDPVMYFLMS) threads the bilayer. The Cytoplasmic portion of the chain corresponds to 325 to 375 (SNIRKIMCQLLFRRFQSEASRSESTSEFKPGHSLHDLSVTVKMPQYSTKGN).

It belongs to the G-protein coupled receptor 1 family. Highly expressed in glial cells such as astrocytes and microglia.

Its subcellular location is the cell membrane. Its function is as follows. G-protein-coupled receptor of lysophosphatidylserine (LysoPS) that plays different roles in immune response. Acts a damage-sensing receptor that triggers tissue repair upon recognition of dying neutrophils. Mechanistically, apoptotic neutrophils release lysophosphatydilserine that are recognized by type 3 innate lymphoid cells (ILC3s) via GPR34, which activates downstream PI3K-AKT and RAS-ERK signaling pathways leading to STAT3 activation and IL-22 production. Plays an important role in microglial function, controlling morphology and phagocytosis. In Mus musculus (Mouse), this protein is Probable G-protein coupled receptor 34 (Gpr34).